The following is a 206-amino-acid chain: Ribosomal RNA small subunit methyltransferase G (206 aa).

S-adenosyl-L-methionine-binding positions include glycine 73, leucine 78, 124–125 (VE), and arginine 139.

It belongs to the methyltransferase superfamily. RNA methyltransferase RsmG family.

It is found in the cytoplasm. It carries out the reaction guanosine(527) in 16S rRNA + S-adenosyl-L-methionine = N(7)-methylguanosine(527) in 16S rRNA + S-adenosyl-L-homocysteine. Specifically methylates the N7 position of guanine in position 527 of 16S rRNA. This chain is Ribosomal RNA small subunit methyltransferase G, found in Yersinia enterocolitica serotype O:8 / biotype 1B (strain NCTC 13174 / 8081).